A 105-amino-acid chain; its full sequence is Circadian clock oscillator protein KaiB1 (105 aa).

The protein belongs to the KaiB family. As to quaternary structure, homotetramer in solution and crystals formed by 2 dimers. Only elutes as a homotetramer in size exclusion chromatography, interacts with KaiC1 and KaiC3. The KaiABC complex composition changes during the circadian cycle to control KaiC phosphorylation. Complexes KaiC(6), KaiA(2-4):KaiC(6), KaiB(6):KaiC(6) and KaiC(6):KaiB(6):KaiA(12) are among the most important forms, many form cooperatively. Undergoes a major conformational rearrangment; in the free state forms homotetramers as a dimer of dimers. When bound to the CI domain of KaiC switches to a monomeric thioredoxin-fold (KaiB(fs)). KaiB(fs) binds CikA, leading it to dephosphorylate phospho-RpaA.

Its function is as follows. Key component of the KaiABC oscillator complex, which constitutes the main circadian regulator in cyanobacteria. Complex composition changes during the circadian cycle to control KaiC phosphorylation. KaiA stimulates KaiC autophosphorylation, while KaiB sequesters KaiA, leading to KaiC autodephosphorylation. Phospho-Ser-431 KaiC accumulation triggers binding of KaiB to form the KaiB(6):KaiC(6) complex, leading to changes in output regulators CikA and SasA. KaiB switches to a thioredoxin-like fold (KaiB(fs)) when bound to KaiC. KaiB(6):KaiC(6) formation exposes a site for KaiA binding that sequesters KaiA from KaiC, making the KaiC(6):KaiB(6):KaiA(12) complex that results in KaiC autodephosphorylation. In terms of biological role, component of the oscillator and circadian clock in this organism, enhances fitness in a rhythmic environment. The homotetramer reduces the ATPase activity of KaiC3 by 35%. Functionally, a metamorphic protein which reversibly switches between an inactive tetrameric fold and a rare, thioredoxin-like monomeric fold (KaiB(fs)). KaiB(fs) binds phospho-KaiC, KaiA and CikA. KaiA and CikA compete for binding to KaiB(fs), and KaiB(fs) and SasA compete for binding to KaiC, thus the clock oscillator and output signal pathway are tightly coupled. This is Circadian clock oscillator protein KaiB1 from Synechocystis sp. (strain ATCC 27184 / PCC 6803 / Kazusa).